The following is a 1001-amino-acid chain: Phosphoenolpyruvate carboxylase (1001 aa).

Active-site residues include His-189 and Lys-642.

This sequence belongs to the PEPCase type 1 family. The cofactor is Mg(2+).

The catalysed reaction is oxaloacetate + phosphate = phosphoenolpyruvate + hydrogencarbonate. Functionally, forms oxaloacetate, a four-carbon dicarboxylic acid source for the tricarboxylic acid cycle. This Prochlorococcus marinus (strain SARG / CCMP1375 / SS120) protein is Phosphoenolpyruvate carboxylase.